We begin with the raw amino-acid sequence, 253 residues long: Complement C1q subcomponent subunit B (253 aa).

An N-terminal signal peptide occupies residues 1–25; that stretch reads MKTQWSEILTPLLLLLLGLLHVSWA. Residue glutamine 26 is modified to Pyrrolidone carboxylic acid. One can recognise a Collagen-like domain in the interval 29–112; the sequence is CTGSPGIPGV…GPRGPKGGSG (84 aa). The tract at residues 29 to 114 is disordered; sequence CTGSPGIPGV…RGPKGGSGDY (86 aa). Residues proline 33, proline 36, proline 39, proline 51, and proline 54 each carry the 4-hydroxyproline modification. Lysine 57 and lysine 60 each carry 5-hydroxylysine. Proline 63 carries the 4-hydroxyproline modification. Residues 68 to 77 show a composition bias toward basic and acidic residues; sequence DHGELGEKGD. Lysine 75 carries the post-translational modification 5-hydroxylysine. The segment covering 78 to 96 has biased composition (low complexity); the sequence is AGIPGIPGKVGPKGPVGPK. 4-hydroxyproline occurs at positions 81 and 84. Lysine 90 and lysine 96 each carry 5-hydroxylysine. 4-hydroxyproline is present on residues proline 99 and proline 102. 5-hydroxylysine is present on lysine 108. The C1q domain maps to 115–253; it reads KATQKVAFSA…GFLLFPDMDV (139 aa). A disulfide bridge connects residues cysteine 179 and cysteine 198. Residues aspartate 199, tyrosine 200, and glutamine 206 each coordinate Ca(2+).

Core component of the complement C1 complex, a calcium-dependent complex composed of 1 molecule of the C1Q subcomplex, 2 molecules of C1R and 2 molecules of C1S. The C1Q subcomplex is composed 18 subunits: 3 chains of C1QA, C1QB, and C1QC trimerize to form 6 collagen-like triple helices connected to six globular ligand-recognition modules (C1q domain). Post-translationally, hydroxylated on lysine and proline residues. Hydroxylated lysine residues can be glycosylated. Human C1Q contains up to 68.3 hydroxylysine-galactosylglucose residues and up to 2.5 hydroxylysine-galactose per molecule. Total percentage hydroxylysine residues glycosylated is 86.4%. In terms of tissue distribution, highest levels in spleen, lung and brain. Weaker expression in kidney and liver. In the spleen, localized mainly to the red pulp, in cells mainly of monocyte-macrophage lineage. In white pulp, localized in specific dendritic cells such as those from the periarteriolar lymphatic sheath (PALS).

It localises to the secreted. Its subcellular location is the cell surface. Its activity is regulated as follows. The C1Q subcomplex is inhibited by sulfated molecules, such as triterpenoid sulfates, heparan sulfate, or chondroitin sulfates. Its function is as follows. Core component of the complement C1 complex, a multiprotein complex that initiates the classical pathway of the complement system, a cascade of proteins that leads to phagocytosis and breakdown of pathogens and signaling that strengthens the adaptive immune system. The classical complement pathway is initiated by the C1Q subcomplex of the C1 complex, which specifically binds IgG or IgM immunoglobulins complexed with antigens, forming antigen-antibody complexes on the surface of pathogens: C1QA, together with C1QB and C1QC, specifically recognizes and binds the Fc regions of IgG or IgM via its C1q domain. Immunoglobulin-binding activates the proenzyme C1R, which cleaves C1S, initiating the proteolytic cascade of the complement system. The C1Q subcomplex is activated by a hexamer of IgG complexed with antigens, while it is activated by a pentameric IgM. The C1Q subcomplex also recognizes and binds phosphatidylserine exposed on the surface of cells undergoing programmed cell death, possibly promoting activation of the complement system. The sequence is that of Complement C1q subcomponent subunit B from Rattus norvegicus (Rat).